A 381-amino-acid chain; its full sequence is MADAVILGIESSCDETAAAVIRNGAEILSSVVFSQIYTHMRYGGVVPELASREHLKAIVPVVRQAVEDAGQSYDKIDAIAVTRGPGLAGALLVGVSYAKALSFALDKPLIGVNHLEGHIHVVLLEQKQQGVGEIQFPVLALVVSGGHTHLYLAEKKDAGWTYRDVGHTRDDAAGEAYDKVAKLLGLGYPGGPILDGLAKHGDPRAVRFPFAQIKHRDRNPQNRHEDDDARVDFSYSGIKTAVLRYVETHEMKAAIEARRTALKEIEKPSQDDYLRVCDRQTLDLIASFQRAVVNDLVSKALHAAAENNAATLLVTGGVAANSELRETFERRAGELGLPVYFPSRPLSTDNAAMIAAAAYPRFLSGEFAAPDLSAEANLRLR.

The Fe cation site is built by His114 and His118. Residues 142–146 (VVSGG), Asp178, Gly191, Asp195, and Asn321 contribute to the substrate site. Fe cation is bound at residue Asp349.

It belongs to the KAE1 / TsaD family. Fe(2+) serves as cofactor.

The protein localises to the cytoplasm. It carries out the reaction L-threonylcarbamoyladenylate + adenosine(37) in tRNA = N(6)-L-threonylcarbamoyladenosine(37) in tRNA + AMP + H(+). In terms of biological role, required for the formation of a threonylcarbamoyl group on adenosine at position 37 (t(6)A37) in tRNAs that read codons beginning with adenine. Is involved in the transfer of the threonylcarbamoyl moiety of threonylcarbamoyl-AMP (TC-AMP) to the N6 group of A37, together with TsaE and TsaB. TsaD likely plays a direct catalytic role in this reaction. In Koribacter versatilis (strain Ellin345), this protein is tRNA N6-adenosine threonylcarbamoyltransferase.